The primary structure comprises 415 residues: MKTKFVVEKSPPLKGTVKISGAKNSVLPIIAASLLSSDEVILEDIPSLEDVNVMIELIKNFGALCELDNGKLKIKVDIKDVEAPYELVKKMRASFLVMGPILAKLGHAKISMPGGCAIGARPIDLHLKGFQSLGADITIGHGYVEARAKKLTGKKIYLDFPSVGATENIMMAAVFADGVTVIENAAEEPEIVDLANFLNKMGANIKGAGTDTIRIEGVKELKGAEHTVIPDRIEAGTFMVAAAMTGGNVLIENVIVDHVRSVIAKLTECGVKITEEKGGLRVKGVKNYKAVDIKTLPYPGFPTDMQAQMMAMMTVAKGTSVIIETVFENRFMHVSELKRMGANIKIEGRSAMITGVDHLTGAEVKATDLRAGAALVLAGLIAEGRTEINDIYHVDRGYVKMEEKLRALGAKIYRK.

23–24 (KN) is a binding site for phosphoenolpyruvate. Arg-92 serves as a coordination point for UDP-N-acetyl-alpha-D-glucosamine. Cys-116 serves as the catalytic Proton donor. At Cys-116 the chain carries 2-(S-cysteinyl)pyruvic acid O-phosphothioketal. Residues 121 to 125 (RPIDL), Asp-304, and Val-326 each bind UDP-N-acetyl-alpha-D-glucosamine.

The protein belongs to the EPSP synthase family. MurA subfamily.

Its subcellular location is the cytoplasm. The enzyme catalyses phosphoenolpyruvate + UDP-N-acetyl-alpha-D-glucosamine = UDP-N-acetyl-3-O-(1-carboxyvinyl)-alpha-D-glucosamine + phosphate. It functions in the pathway cell wall biogenesis; peptidoglycan biosynthesis. In terms of biological role, cell wall formation. Adds enolpyruvyl to UDP-N-acetylglucosamine. This chain is UDP-N-acetylglucosamine 1-carboxyvinyltransferase 1, found in Caldanaerobacter subterraneus subsp. tengcongensis (strain DSM 15242 / JCM 11007 / NBRC 100824 / MB4) (Thermoanaerobacter tengcongensis).